The chain runs to 98 residues: Protein Vpr (98 aa).

Residues 1–42 (MEQLPEDQGPQREPYNEWTLEILEELKREAVRHFPRDWLHQL) form a homooligomerization region. Phosphoserine; by host is present on residues Ser-79 and Ser-98.

It belongs to the HIV-1 VPR protein family. As to quaternary structure, homooligomer, may form homodimer. Interacts with p6-gag region of the Pr55 Gag precursor protein through a (Leu-X-X)4 motif near the C-terminus of the P6gag protein. Interacts with host UNG. May interact with host RAD23A/HHR23A. Interacts with host VPRBP/DCAF1, leading to hijack the CUL4A-RBX1-DDB1-DCAF1/VPRBP complex, mediating ubiquitination of host proteins such as TERT and ZGPAT and arrest of the cell cycle in G2 phase. Post-translationally, phosphorylated on several residues by host. These phosphorylations regulate VPR activity for the nuclear import of the HIV-1 pre-integration complex.

The protein localises to the virion. It localises to the host nucleus. It is found in the host extracellular space. During virus replication, may deplete host UNG protein, and incude G2-M cell cycle arrest. Acts by targeting specific host proteins for degradation by the 26S proteasome, through association with the cellular CUL4A-DDB1 E3 ligase complex by direct interaction with host VPRPB/DCAF-1. Cell cycle arrest reportedly occurs within hours of infection and is not blocked by antiviral agents, suggesting that it is initiated by the VPR carried into the virion. Additionally, VPR induces apoptosis in a cell cycle dependent manner suggesting that these two effects are mechanistically linked. Detected in the serum and cerebrospinal fluid of AIDS patient, VPR may also induce cell death to bystander cells. Its function is as follows. During virus entry, plays a role in the transport of the viral pre-integration (PIC) complex to the host nucleus. This function is crucial for viral infection of non-dividing macrophages. May act directly at the nuclear pore complex, by binding nucleoporins phenylalanine-glycine (FG)-repeat regions. This chain is Protein Vpr, found in Pan troglodytes (Chimpanzee).